The sequence spans 280 residues: Urease accessory protein UreD (280 aa).

This sequence belongs to the UreD family. UreD, UreF and UreG form a complex that acts as a GTP-hydrolysis-dependent molecular chaperone, activating the urease apoprotein by helping to assemble the nickel containing metallocenter of UreC. The UreE protein probably delivers the nickel.

It localises to the cytoplasm. Functionally, required for maturation of urease via the functional incorporation of the urease nickel metallocenter. In Vibrio parahaemolyticus, this protein is Urease accessory protein UreD.